A 154-amino-acid chain; its full sequence is MVLSDAEWHLVLNIWAKVEADVAGHGQDILIRLFKGHPETLEKFDKFKHLKTEAEMKASEDLKKHGNTVLTALGGILKKKGHHEAELKPLAQSHATKHKIPIKYLEFISDAIIHVLHSRHPAEFGADAQAAMNKALELFRKDIAAKYKELGFQG.

One can recognise a Globin domain in the interval 2-148 (VLSDAEWHLV…FRKDIAAKYK (147 aa)). S4 carries the phosphoserine modification. Residue H65 coordinates nitrite. H65 is a binding site for O2. T68 carries the phosphothreonine modification. Residue H94 participates in heme b binding.

The protein belongs to the globin family. In terms of assembly, monomeric.

The protein resides in the cytoplasm. It is found in the sarcoplasm. The catalysed reaction is Fe(III)-heme b-[protein] + nitric oxide + H2O = Fe(II)-heme b-[protein] + nitrite + 2 H(+). It catalyses the reaction H2O2 + AH2 = A + 2 H2O. Its function is as follows. Monomeric heme protein which primary function is to store oxygen and facilitate its diffusion within muscle tissues. Reversibly binds oxygen through a pentacoordinated heme iron and enables its timely and efficient release as needed during periods of heightened demand. Depending on the oxidative conditions of tissues and cells, and in addition to its ability to bind oxygen, it also has a nitrite reductase activity whereby it regulates the production of bioactive nitric oxide. Under stress conditions, like hypoxia and anoxia, it also protects cells against reactive oxygen species thanks to its pseudoperoxidase activity. This is Myoglobin (MB) from Balaenoptera acutorostrata (Common minke whale).